Here is a 563-residue protein sequence, read N- to C-terminus: MNSGLSSAIIPVHPTKISVHLFEILQGKYAYVKGQTLHSSLRNPGVFSRQLFIHIYKTVLSSCTYDHVISDWHKYEDNIKTRWKNENFTSDSFRKSTYQSWAQTMRMTIDQLVLNNIYQIIHSKITSYERYTDWVMALGLVPVVKQLPDEKLIRQIQSQLSAASKIAAGNDRVMRTILSALEYTVTDMLETLTSIYIPDYSEVTIDYRSKDQLFVGTYKGKHIAVEVITRPVIAKNIFFDSPVQRLFQNIMSCYRTTEHAKLCQLLNTAPIKAICGASTQNVYKDILSHLEQNSQKSDPKRELLSLLVKLAENKTVSGVTDVVEEFITDVSQNIVDKNKLFGSQESTTQGLKKHVSNNVFKCLTSQINEQFDTINKLEKERELYLGKINQIETQLLHLTQDEKQSVSPDNVLVSDTFCSLQTLQSSKLSMTSSDVPKGAAVLNSFFSQYVPPFRELNKDLTLLWESEIFHTFKLTPVVDPQGQRLYVKYTQDTVTILIGPFTYSITKLHQMELINDIFVSMSFNDIASYIYSTSRLAVYIADIGNKYCPSETDGSSSSSVTGS.

Belongs to the herpesviridae portal protein family. Homododecamerizes. Interacts with terminase subunits TRM1 and TRM3.

It is found in the virion. Its subcellular location is the host nucleus. Its function is as follows. Forms a portal in the viral capsid through which viral DNA is translocated during DNA packaging. Assembles as a dodecamer at a single fivefold axe of the T=16 icosahedric capsid. Binds to the molecular motor that translocates the viral DNA, termed terminase. This chain is Portal protein (43), found in Saimiri sciureus (Common squirrel monkey).